The chain runs to 147 residues: Large ribosomal subunit protein uL15 (147 aa).

Positions 1–13 (MKLENLKSKEGSR) are enriched in basic and acidic residues. Residues 1–54 (MKLENLKSKEGSRHKTKRVGRGFGSGIGKTSTRGSKGQKSRKSGHTRPGFEGGQ) form a disordered region. Basic residues predominate over residues 36-45 (KGQKSRKSGH).

It belongs to the universal ribosomal protein uL15 family. As to quaternary structure, part of the 50S ribosomal subunit.

Binds to the 23S rRNA. In Malacoplasma penetrans (strain HF-2) (Mycoplasma penetrans), this protein is Large ribosomal subunit protein uL15.